Consider the following 2731-residue polypeptide: MMNPQQILQQQQQMIQQQQQQLHQQQMQQQQMQQQQQHHMQQQQPMQHMQQPHHMIHQQQPIIIQQHLHHQIHPHIQQQQQQQQQQQQQQQQQQQQQQQQQQQQQQVHPSHLQQQVHHPQLHMQQHIPQHMQQHHIMQQHQQIHQMQMQQQQQQQQQQQQQQQQQQQQQQQQQQQQQQQQQQQHQQQQQPIQQQHIVQQQPIQQQPIQQHIVQQPIQQQIQQQPQIQQQQIPQPQIQIPSQIQQPLQQQQIQQQQIPLPQQVPLAQTQQQQTAPIQQLQQQQQLQQQQQQQQQQQQQQQQQQQQPQQVQQPQQQQQQQQPVARRPIQNPSYHSQSQIGHPMRGGGLKKYEIQKPADKKELGPDLGVPDFYPLDDKSKEDTLPQEFILGGFCERYQHDECKSSSSIFKNFDFPKVKEQLLQSIYQVEWKKSSTQKSGQPPVMNKSGNKRPVPEQKAWSANHRESWVLKLAGNEPLQKLASSVPHGYKGETLLKMFLDNQVPLIRATWYTKIVYGNMPKHKTVEPSNDWTKTIVQSLFALIRNTTGENNSSGSSSSNNVLGGNSGSGVVKKATSSYTGILYIERLIKWNFSEGLLNKDILLSMLIDHLNETDRPEEAVLISSLLLYYSDTLILSTYHSMKFLNKAYEKLMKITISSAAAVSAASSSSSSSSTQSNITALSNPKLQQLGHGHGHGHGHHSHSHSHNQQQPQLNITSTQTIPSINSIASSLSPSNQKIYSILCIISKQISMNLPDTFMSFKFFRELVSLIWPSNLIDRIEYNQLSFVNNLRFTVSPEYKWINKYYSEINKNQQTQLKQLRQQQNNNIGFKNNKNNNSIINKQNNITNNNNNNNNNSRGGINYSNLIKSLDRFYTTFDLKLLYHEIFGNGNQVSLEDDKEKILLVCEWACTSCRNYPFSFLSATSILKIFERNLTIKLNNIVLNHPLQNILVHFLETFKPKNIELKRICQLFSELIRNEIFSQNSYARYLISRGILENSNININGNHNGDKNNNINGRLENNKYHKYYLKEFPIFNRNDFPSYDIHQQRNQRRTILFPNTIKSQEEINSMEQARISVKSFILNSANSNNENDNNSDMMVDGGGGGGGGDKQNIGLIQLSQIIQSLSFYSQISLTEWLSLCLRLNFNNPSNDDNNNNNNNNNNHHQLSDYSMKGFRHFSFPITQFYIERVFIIMESVSNYHSILQCLLVLWDNWNNIKELQSFVFYTTKRLQQAFIVSDQFISLLDIIYKKVINLSRNNNNNNKNKNNNKQSNNIKKEGTNGEEQESDDDDDDDEDDDDDDNDENDKVNDNDNEEDDEEDDEDEDEDEDDQMDETKDSIKQQQQQKSNENYIESYLYDILNKFKSIKSVQIWIKRNNVQCKLKKELSNDKNMIDKSELKNSCDFMIDQVLSIKNQLKQEQEQQNCEIINNIIKRFDEELISNNLINSLMNQFKTKVSNILLGCENGGSGGGGGGGNLSDQDICEEFMKSLISKTIDDNKNNDNNNNNENENNNIISKTIIIIKQQMVLSRLLCLFSIVYPISMNGKQLFLRLFKDQLSIILKTFINSNDSMEIQEKYFFKVILLLVTLILNQYIDLYSIMVYSILPLLQSNEIESDEDCKVWFLIKIIQVLLCDGKLIQFVYKDIFIDNNNNNHQSNQGGGGDSGNNNLTNLKTIINHQVISLNLTNKSKISSLSEIFQTICKLYHQYHEKIKDTIDDDNNNNNSKNELSTSIFQGICTILTDPDSRYIFLNSSQIDKIKQLGLGPIETRYLFHLILGNLKNDHDDNNENNNNNNNNNNNNNNNNNNNNNNNNNNNNNNNNNNNNNNNNNGFNFKINNSRIIIQYEQLKLENCITYSFKVINSTLTNSSNCYWNIHLSYIGLKLLLDEWKTLPPIISTQSSTTSPLTKSPSQSPTLQSQDLNSTNSTSPTSKQSQQQQQQQQQKSTTPTLTPATTTTTTTNNTTTFTPESIITQFILLHFEENRGWERVFIYEDLFLLFPLEVRNELIKISTIILESQYKETSFIQPSTDLPLIKHIQQNLPISQLLKQQPQQYQLILNRESSGTNKAVLINDDNLDNILFQESFTDIIINILSTYEDSNPISNSFILSLFKQLSMFNQFSKGGVLDTINLDSTLSEIVIQSVVIRITFLITQIKNCKLIVKQSTQKLEEISVTLLNLLSKFIIQSDGEFNLFDPILTIFDLILSDKFGNDNILNYSSSSSSTTTTSTTSTPVTSSPSTTTTATTNQQQQQQQQQQADQKNNVKKKLHELYQKIKSSFPTSLQLKLEKQLSFLSTNPTSLPFTIIHPPTLVNTSSVSSTNTSIQSTTSPIIAPVTPPSNFNLQQQTSQQQQQQQQQQQQQSQQHQQQQQTPQQQQQSQQQQQQQQQQTATTASTASQIPPQAVSSILDIKPTYTQMDPWTLLEDYSETPLSPSIYGGVKMERKELTYIKSSFPSKNMALVNEPVDQKLLAQRKSQVQEIEKQQQQQQIKSQPSTPLTSLPPQQHQQLQPPPPQLQQQLNQQQQRQQPPQQLQQQKPQTQQQQQQQQQQQQQQQQQQQQQQTQKQPQQPQQPQQSQQFQQYQQFEQQQQALQFHLNQQKMQQLQPQQLNQQQLNQQQLNQQLNQQQQLNQQQFQLHQQQQQQLKQQQLQQQQLQQQIQQQQQQQQLQQLIQPQQFQQQNLKRNFNNLSQPPLPQQQQQQQIHLQQQQIPQQHQQIPQQQQHQQHQQQKCSTTKYNNYK.

4 coiled-coil regions span residues Gln-5–Gln-37, His-75–His-108, Gln-141–Gln-189, and Ile-275–Gln-304. 2 disordered regions span residues Gln-29–His-57 and Gln-101–Gln-145. Residues Gln-310–Pro-320 show a composition bias toward low complexity. Disordered stretches follow at residues Gln-310 to Ser-376, Thr-432 to Pro-451, Leu-685 to Gln-708, and Arg-1251 to Ser-1341. Polar residues predominate over residues Gln-327 to Ile-337. The span at Lys-347–Gly-361 shows a compositional bias: basic and acidic residues. Over residues Gly-688–Ser-701 the composition is skewed to basic residues. Residues Arg-1251–Asn-1268 are compositionally biased toward low complexity. Composition is skewed to acidic residues over residues Asn-1275–Glu-1298 and Asn-1305–Met-1326. Coiled-coil stretches lie at residues Glu-1316–Asn-1344 and Lys-1375–Leu-1433. Disordered regions lie at residues His-1778 to Gly-1825, Thr-1892 to Thr-1958, Ser-2212 to Lys-2258, Thr-2307 to Gln-2351, Glu-2472 to Thr-2532, and His-2705 to Lys-2731. 9 stretches are compositionally biased toward low complexity: residues Glu-1783–Asn-1824, Thr-1892–Thr-1909, Asn-1916–Thr-1958, Ser-2212–Gln-2250, Thr-2307–Ser-2322, Gln-2337–Gln-2351, Glu-2472–Leu-2501, Leu-2508–Thr-2532, and His-2705–Gln-2720. A coiled-coil region spans residues Thr-2239–Ser-2270. A coiled-coil region spans residues Leu-2336–Gln-2363. Positions Gln-2523–Leu-2662 form a coiled coil. Positions Lys-2721–Lys-2731 are enriched in polar residues.

It belongs to the Mediator complex subunit 12 family. Component of the Mediator complex.

It localises to the nucleus. Functionally, component of the Mediator complex, a coactivator involved in the regulated transcription of nearly all RNA polymerase II-dependent genes. Mediator functions as a bridge to convey information from gene-specific regulatory proteins to the basal RNA polymerase II transcription machinery. Mediator is recruited to promoters by direct interactions with regulatory proteins and serves as a scaffold for the assembly of a functional preinitiation complex with RNA polymerase II and the general transcription factors. The sequence is that of Putative mediator of RNA polymerase II transcription subunit 12 (med12) from Dictyostelium discoideum (Social amoeba).